A 474-amino-acid polypeptide reads, in one-letter code: Carbohydrate sulfotransferase 3 (474 aa).

At 1–19 (MEKGLALPQDCRDLVHNLK) the chain is on the cytoplasmic side. A helical; Signal-anchor for type II membrane protein transmembrane segment spans residues 20–38 (IRGRYVLFLAFVVIVFIFI). The Lumenal segment spans residues 39-474 (EKENKIISRV…LEERGTFWVT (436 aa)). 3 N-linked (GlcNAc...) asparagine glycosylation sites follow: N63, N74, and N96. Residue 137–143 (TRTGSSF) coordinates 3'-phosphoadenylyl sulfate. N252 is a glycosylation site (N-linked (GlcNAc...) asparagine). Residue 297 to 305 (RDPRAVLAS) coordinates 3'-phosphoadenylyl sulfate. N-linked (GlcNAc...) asparagine glycans are attached at residues N415 and N459.

The protein belongs to the sulfotransferase 1 family. Gal/GlcNAc/GalNAc subfamily. In terms of processing, N-glycosylated.

It is found in the golgi apparatus membrane. It catalyses the reaction chondroitin beta-D-glucuronate + n 3'-phosphoadenylyl sulfate = chondroitin 6'-sulfate + n adenosine 3',5'-bisphosphate + n H(+). It carries out the reaction 3'-phosphoadenylyl sulfate + keratan = adenosine 3',5'-bisphosphate + keratan 6'-sulfate.. Functionally, sulfotransferase that utilizes 3'-phospho-5'-adenylyl sulfate (PAPS) as sulfonate donor to catalyze the transfer of sulfate to position 6 of the N-acetylgalactosamine (GalNAc) residue of chondroitin. Chondroitin sulfate constitutes the predominant proteoglycan present in cartilage and is distributed on the surfaces of many cells and extracellular matrices. Catalyzes with a lower efficiency the sulfation of Gal residues of keratan sulfate, another glycosaminoglycan. Can also catalyze the sulfation of the Gal residues in sialyl N-acetyllactosamine (sialyl LacNAc) oligosaccharides. May play a role in the maintenance of naive T-lymphocytes in the spleen. This is Carbohydrate sulfotransferase 3 (Chst3) from Rattus norvegicus (Rat).